Reading from the N-terminus, the 95-residue chain is Small ubiquitin-related modifier 4 (95 aa).

Residues 17-95 (HINLKVAGQD…VFQQPTGGVY (79 aa)) form the Ubiquitin-like domain. Residue glycine 93 forms a Glycyl lysine isopeptide (Gly-Lys) (interchain with K-? in acceptor proteins) linkage. The propeptide occupies 94–95 (VY).

The protein belongs to the ubiquitin family. SUMO subfamily. As to quaternary structure, interacts with SAE2. Covalently attached to a number of proteins. In terms of processing, in contrast to SUMO1, SUMO2 and SUMO3, seems to be insensitive to sentrin-specific proteases due to the presence of Pro-90. This may impair processing to mature form and conjugation to substrates. In terms of tissue distribution, expressed mainly in adult and embryonic kidney. Expressed at various levels in immune tissues, with the highest expression in the lymph node and spleen.

Ubiquitin-like protein which can be covalently attached to target lysines as a monomer. Does not seem to be involved in protein degradation and may modulate protein subcellular localization, stability or activity. Upon oxidative stress, conjugates to various anti-oxidant enzymes, chaperones, and stress defense proteins. May also conjugate to NFKBIA, TFAP2A and FOS, negatively regulating their transcriptional activity, and to NR3C1, positively regulating its transcriptional activity. Covalent attachment to its substrates requires prior activation by the E1 complex SAE1-SAE2 and linkage to the E2 enzyme UBE2I. The protein is Small ubiquitin-related modifier 4 (SUMO4) of Homo sapiens (Human).